A 137-amino-acid chain; its full sequence is Ribosomal RNA small subunit methyltransferase G (137 aa).

S-adenosyl-L-methionine is bound by residues Gly-75, Phe-80, and 126 to 127 (AE).

Belongs to the methyltransferase superfamily. RNA methyltransferase RsmG family.

Its subcellular location is the cytoplasm. Functionally, specifically methylates the N7 position of a guanine in 16S rRNA. The polypeptide is Ribosomal RNA small subunit methyltransferase G (Mycoplasma mycoides subsp. mycoides SC (strain CCUG 32753 / NCTC 10114 / PG1)).